A 187-amino-acid chain; its full sequence is UPF0301 protein VF_0434 (187 aa).

The protein belongs to the UPF0301 (AlgH) family.

The sequence is that of UPF0301 protein VF_0434 from Aliivibrio fischeri (strain ATCC 700601 / ES114) (Vibrio fischeri).